Here is a 38-residue protein sequence, read N- to C-terminus: Large ribosomal subunit protein bL12 (38 aa).

Belongs to the bacterial ribosomal protein bL12 family. As to quaternary structure, homodimer. Part of the ribosomal stalk of the 50S ribosomal subunit. Forms a multimeric L10(L12)X complex, where L10 forms an elongated spine to which 2 to 4 L12 dimers bind in a sequential fashion. Binds GTP-bound translation factors.

Forms part of the ribosomal stalk which helps the ribosome interact with GTP-bound translation factors. Is thus essential for accurate translation. The sequence is that of Large ribosomal subunit protein bL12 (rplL) from Salinivibrio costicola (Vibrio costicola).